The sequence spans 167 residues: NAD(P)H-quinone oxidoreductase subunit J (167 aa).

This sequence belongs to the complex I 30 kDa subunit family. NDH-1 can be composed of about 15 different subunits; different subcomplexes with different compositions have been identified which probably have different functions.

Its subcellular location is the cellular thylakoid membrane. The catalysed reaction is a plastoquinone + NADH + (n+1) H(+)(in) = a plastoquinol + NAD(+) + n H(+)(out). It carries out the reaction a plastoquinone + NADPH + (n+1) H(+)(in) = a plastoquinol + NADP(+) + n H(+)(out). NDH-1 shuttles electrons from an unknown electron donor, via FMN and iron-sulfur (Fe-S) centers, to quinones in the respiratory and/or the photosynthetic chain. The immediate electron acceptor for the enzyme in this species is believed to be plastoquinone. Couples the redox reaction to proton translocation, and thus conserves the redox energy in a proton gradient. Cyanobacterial NDH-1 also plays a role in inorganic carbon-concentration. This Microcystis aeruginosa (strain NIES-843 / IAM M-2473) protein is NAD(P)H-quinone oxidoreductase subunit J.